The chain runs to 246 residues: MKYDIIGDIHGCFQEFQDLTKKLGYNWNSDLPIHPDQRKLAFVGDITDRGPHSLRMIEIVWELVINKKVAYYAPGNHCNKLYRFFLGRNVTIAHGLETTVAEYEALPSHQQNMIKEKFITLYEQSPLYHVLDEKRLIVCHAGIRQDYIGRQDKKVQTFVLYGDITGEKHADGSPVRRDWAKEYKGTAWVVYGHTPVKEPRFVNHTVNIDTGAVFGGKLTGLRYPEMETVSVPSSLPFVPEKFRPIS.

It belongs to the PrpE family. Requires Ni(2+) as cofactor.

The enzyme catalyses P(1),P(4)-bis(5'-guanosyl) tetraphosphate + H2O = GMP + GTP + 2 H(+). In terms of biological role, asymmetrically hydrolyzes Ap4p to yield AMP and ATP. This is Bis(5'-nucleosyl)-tetraphosphatase PrpE [asymmetrical] from Bacillus cereus (strain ATCC 10987 / NRS 248).